The chain runs to 116 residues: Non-specific lipid-transfer protein (116 aa).

An N-terminal signal peptide occupies residues 1–22; that stretch reads MSLKLACVVVLCMVVGAPLAQG. 3 disulfide bridges follow: Cys-36/Cys-52, Cys-53/Cys-98, and Cys-73/Cys-112.

The protein belongs to the plant LTP family.

Its function is as follows. Plant non-specific lipid-transfer proteins transfer phospholipids as well as galactolipids across membranes. May play a role in wax or cutin deposition in the cell walls of expanding epidermal cells and certain secretory tissues. The polypeptide is Non-specific lipid-transfer protein (Gossypium hirsutum (Upland cotton)).